We begin with the raw amino-acid sequence, 108 residues long: Replication restart protein PriB (108 aa).

Residues 8–108 (IDNSFSVMGV…LHAEQIEFID (101 aa)) enclose the SSB domain.

Belongs to the PriB family. Homodimer. Interacts with PriA and DnaT. Component of the replication restart primosome. Primosome assembly occurs via a 'hand-off' mechanism. PriA binds to replication forks, subsequently PriB then DnaT bind; DnaT then displaces ssDNA to generate the helicase loading substrate.

Its function is as follows. Involved in the restart of stalled replication forks, which reloads the replicative helicase on sites other than the origin of replication; the PriA-PriB pathway is the major replication restart pathway. During primosome assembly it facilitates complex formation between PriA and DnaT on DNA; stabilizes PriA on DNA. Stimulates the DNA unwinding activity of PriA helicase. This chain is Replication restart protein PriB, found in Haemophilus influenzae (strain ATCC 51907 / DSM 11121 / KW20 / Rd).